The sequence spans 72 residues: SRY-related protein ADW4 (72 aa).

The segment at residues V1–K69 is a DNA-binding region (HMG box).

Its subcellular location is the nucleus. This is SRY-related protein ADW4 from Alligator mississippiensis (American alligator).